Reading from the N-terminus, the 196-residue chain is Imidazoleglycerol-phosphate dehydratase (196 aa).

It belongs to the imidazoleglycerol-phosphate dehydratase family.

It is found in the cytoplasm. The enzyme catalyses D-erythro-1-(imidazol-4-yl)glycerol 3-phosphate = 3-(imidazol-4-yl)-2-oxopropyl phosphate + H2O. Its pathway is amino-acid biosynthesis; L-histidine biosynthesis; L-histidine from 5-phospho-alpha-D-ribose 1-diphosphate: step 6/9. This is Imidazoleglycerol-phosphate dehydratase from Zymomonas mobilis subsp. mobilis (strain ATCC 31821 / ZM4 / CP4).